The primary structure comprises 568 residues: 2-succinyl-5-enolpyruvyl-6-hydroxy-3-cyclohexene-1-carboxylate synthase (568 aa).

The protein belongs to the TPP enzyme family. MenD subfamily. Homodimer. The cofactor is Mg(2+). Requires Mn(2+) as cofactor. It depends on thiamine diphosphate as a cofactor.

It catalyses the reaction isochorismate + 2-oxoglutarate + H(+) = 5-enolpyruvoyl-6-hydroxy-2-succinyl-cyclohex-3-ene-1-carboxylate + CO2. It participates in quinol/quinone metabolism; 1,4-dihydroxy-2-naphthoate biosynthesis; 1,4-dihydroxy-2-naphthoate from chorismate: step 2/7. It functions in the pathway quinol/quinone metabolism; menaquinone biosynthesis. Functionally, catalyzes the thiamine diphosphate-dependent decarboxylation of 2-oxoglutarate and the subsequent addition of the resulting succinic semialdehyde-thiamine pyrophosphate anion to isochorismate to yield 2-succinyl-5-enolpyruvyl-6-hydroxy-3-cyclohexene-1-carboxylate (SEPHCHC). The chain is 2-succinyl-5-enolpyruvyl-6-hydroxy-3-cyclohexene-1-carboxylate synthase from Histophilus somni (strain 2336) (Haemophilus somnus).